The following is a 242-amino-acid chain: Phosphoribosylaminoimidazole-succinocarboxamide synthase (242 aa).

Belongs to the SAICAR synthetase family.

It catalyses the reaction 5-amino-1-(5-phospho-D-ribosyl)imidazole-4-carboxylate + L-aspartate + ATP = (2S)-2-[5-amino-1-(5-phospho-beta-D-ribosyl)imidazole-4-carboxamido]succinate + ADP + phosphate + 2 H(+). It functions in the pathway purine metabolism; IMP biosynthesis via de novo pathway; 5-amino-1-(5-phospho-D-ribosyl)imidazole-4-carboxamide from 5-amino-1-(5-phospho-D-ribosyl)imidazole-4-carboxylate: step 1/2. This is Phosphoribosylaminoimidazole-succinocarboxamide synthase from Prochlorococcus marinus subsp. pastoris (strain CCMP1986 / NIES-2087 / MED4).